Consider the following 621-residue polypeptide: F-box only protein 21 (621 aa).

Residues 28–77 (SCLVNLPGEVLEYILCCGSLTAADIGRVSSTCRRLRELCQSSGKVWKEQF) enclose the F-box domain.

In terms of assembly, interacts with SKP1 and CUL1.

In terms of biological role, substrate-recognition component of the SCF (SKP1-CUL1-F-box protein)-type E3 ubiquitin ligase complex. This Pongo abelii (Sumatran orangutan) protein is F-box only protein 21 (FBXO21).